The primary structure comprises 206 residues: Large ribosomal subunit protein uL4 (206 aa).

The tract at residues 47–75 (GTQSAKTRAEVSGGGIKPWRQKGTGRARQ) is disordered.

This sequence belongs to the universal ribosomal protein uL4 family. As to quaternary structure, part of the 50S ribosomal subunit.

One of the primary rRNA binding proteins, this protein initially binds near the 5'-end of the 23S rRNA. It is important during the early stages of 50S assembly. It makes multiple contacts with different domains of the 23S rRNA in the assembled 50S subunit and ribosome. In terms of biological role, forms part of the polypeptide exit tunnel. This is Large ribosomal subunit protein uL4 from Clostridium botulinum (strain 657 / Type Ba4).